We begin with the raw amino-acid sequence, 267 residues long: Hydrolase FUB4 (267 aa).

Residues S93, D183, and H243 each act as charge relay system in the active site.

It belongs to the AB hydrolase 3 family.

It functions in the pathway mycotoxin biosynthesis. Functionally, hydrolase; part of the gene cluster that mediates the biosynthesis of fusaric acid, a mycotoxin with low to moderate toxicity to animals and humans, but with high phytotoxic properties. L-aspartate is suggested as fusaric acid amino acid precursor that is activated and further processed to O-acetyl-L-homoserine by cluster enzymes aspartate kinase FUB3 and homoserine O-acetyltransferase FUB5, as well as enzymes of the primary metabolism. The polyketide synthase (PKS) FUB1 generates the triketide trans-2-hexenal which is presumptively released by the hydrolase FUB4 and linked to the NRPS-bound amino acid precursor by NAD(P)-dependent dehydrogenase FUB6. FUB1, FUB4, and the non-canonical NRPS Fub8 may form an enzyme complex. Further processing of the NRPS-bound intermediate might be carried out by FUB6 and the sulfhydrylase FUB7, enabling a spontaneous electrocyclization to close the carbon backbone of fusaric acid. Dihydrofusaric acid is likely to be released via reduction by the thioester reductase (TR) domain of FUB8 whereupon the final oxidation to fusaric acid may (also) be performed by the FMN-dependent dehydrogenase FUB9. In Fusarium oxysporum f. sp. lycopersici (strain 4287 / CBS 123668 / FGSC 9935 / NRRL 34936) (Fusarium vascular wilt of tomato), this protein is Hydrolase FUB4.